Consider the following 443-residue polypeptide: UDP-N-acetylmuramate--L-alanine ligase (443 aa).

ATP is bound at residue 110–116; that stretch reads GAHGKTS.

Belongs to the MurCDEF family.

It localises to the cytoplasm. It catalyses the reaction UDP-N-acetyl-alpha-D-muramate + L-alanine + ATP = UDP-N-acetyl-alpha-D-muramoyl-L-alanine + ADP + phosphate + H(+). It participates in cell wall biogenesis; peptidoglycan biosynthesis. Functionally, cell wall formation. The protein is UDP-N-acetylmuramate--L-alanine ligase of Streptococcus equi subsp. zooepidemicus (strain MGCS10565).